A 466-amino-acid polypeptide reads, in one-letter code: Signal recognition particle 54 kDa protein (466 aa).

Residues 104 to 111, 184 to 188, and 242 to 245 contribute to the GTP site; these read GLQGSGKT, DTAGR, and TKLD. The tract at residues 446 to 466 is disordered; that stretch reads QQQGGGGMGGLGGGGGLGPFG. Residues 448 to 466 show a composition bias toward gly residues; sequence QGGGGMGGLGGGGGLGPFG.

This sequence belongs to the GTP-binding SRP family. SRP54 subfamily. As to quaternary structure, part of the signal recognition particle protein translocation system, which is composed of SRP and FtsY. Archaeal SRP consists of a 7S RNA molecule of 300 nucleotides and two protein subunits: SRP54 and SRP19.

It localises to the cytoplasm. The enzyme catalyses GTP + H2O = GDP + phosphate + H(+). Involved in targeting and insertion of nascent membrane proteins into the cytoplasmic membrane. Binds to the hydrophobic signal sequence of the ribosome-nascent chain (RNC) as it emerges from the ribosomes. The SRP-RNC complex is then targeted to the cytoplasmic membrane where it interacts with the SRP receptor FtsY. The polypeptide is Signal recognition particle 54 kDa protein (Haloquadratum walsbyi (strain DSM 16790 / HBSQ001)).